We begin with the raw amino-acid sequence, 376 residues long: Chaperone protein DnaJ (376 aa).

The J domain maps to 5-70 (DYYEVLGVKK…QKRAAYDQYG (66 aa)). A CR-type zinc finger spans residues 131–209 (GVTKEIRIPT…CHGHGRVEKS (79 aa)). Residues Cys144, Cys147, Cys161, Cys164, Cys183, Cys186, Cys197, and Cys200 each coordinate Zn(2+). 4 CXXCXGXG motif repeats span residues 144-151 (CDVCHGSG), 161-168 (CSTCRGAG), 183-190 (CPTCHGSG), and 197-204 (CNKCHGHG).

Belongs to the DnaJ family. In terms of assembly, homodimer. Zn(2+) serves as cofactor.

The protein resides in the cytoplasm. Functionally, participates actively in the response to hyperosmotic and heat shock by preventing the aggregation of stress-denatured proteins and by disaggregating proteins, also in an autonomous, DnaK-independent fashion. Unfolded proteins bind initially to DnaJ; upon interaction with the DnaJ-bound protein, DnaK hydrolyzes its bound ATP, resulting in the formation of a stable complex. GrpE releases ADP from DnaK; ATP binding to DnaK triggers the release of the substrate protein, thus completing the reaction cycle. Several rounds of ATP-dependent interactions between DnaJ, DnaK and GrpE are required for fully efficient folding. Also involved, together with DnaK and GrpE, in the DNA replication of plasmids through activation of initiation proteins. The polypeptide is Chaperone protein DnaJ (Yersinia enterocolitica serotype O:8 / biotype 1B (strain NCTC 13174 / 8081)).